Consider the following 567-residue polypeptide: Urease subunit alpha (567 aa).

One can recognise a Urease domain in the interval 129-567; sequence GGIDAHIHFI…LPLAQLYCLF (439 aa). Ni(2+) contacts are provided by H134, H136, and K217. K217 is modified (N6-carboxylysine). Residue H219 coordinates substrate. Ni(2+) is bound by residues H246 and H272. Residue H320 is the Proton donor of the active site. Residue D360 coordinates Ni(2+).

Belongs to the metallo-dependent hydrolases superfamily. Urease alpha subunit family. As to quaternary structure, heterotrimer of UreA (gamma), UreB (beta) and UreC (alpha) subunits. Three heterotrimers associate to form the active enzyme. Ni cation serves as cofactor. Carboxylation allows a single lysine to coordinate two nickel ions.

It is found in the cytoplasm. The enzyme catalyses urea + 2 H2O + H(+) = hydrogencarbonate + 2 NH4(+). The protein operates within nitrogen metabolism; urea degradation; CO(2) and NH(3) from urea (urease route): step 1/1. The protein is Urease subunit alpha of Alteromonas mediterranea (strain DSM 17117 / CIP 110805 / LMG 28347 / Deep ecotype).